The primary structure comprises 117 residues: Gamma-aminobutyric acid receptor-associated protein-like 3 (117 aa).

Residues 1–22 (MKFQYKEVHPFEYRKKEGEKIR) form an interaction with beta-tubulin region. The interaction with GABRG2 stretch occupies residues 36–68 (APKARVPDLDRRKYLVPSDLTDGQFYLLIRKRI). A lipid anchor (Phosphatidylethanolamine amidated glycine) is attached at Gly116. Lys117 is a propeptide (removed in mature form).

Belongs to the ATG8 family. Interacts with GABRG2 and beta-tubulin. Post-translationally, the precursor molecule is cleaved by ATG4B to form the cytosolic form, GABARAPL3-I. This is activated by APG7L/ATG7, transferred to ATG3 and conjugated to phospholipid to form the membrane-bound form, GABARAPL3-II. ATG4B also mediates the delipidation required for GABARAPL1 recycling when autophagosomes fuse with lysosomes. In terms of tissue distribution, ubiquitous. Expressed at very high levels in the brain, heart, peripheral blood leukocytes, liver, kidney, placenta and skeletal muscle. Expressed at very low levels in thymus and small intestine.

Its subcellular location is the cytoplasm. The protein localises to the cytoskeleton. The protein resides in the cytoplasmic vesicle. It localises to the autophagosome membrane. In terms of biological role, ubiquitin-like modifier involved in autophagosome formation. Whereas LC3s are involved in elongation of the phagophore membrane, the GABARAP/GATE-16 subfamily is essential for a later stage in autophagosome maturation. The sequence is that of Gamma-aminobutyric acid receptor-associated protein-like 3 (GABARAPL3) from Homo sapiens (Human).